The following is a 330-amino-acid chain: MSNGGNAGKKSSSYFHFTAGLGSGILSAVLLQPADLLKTRLQQSNHASLLTTIRELSQSPNTIRSFWRGTVPSALRTGFGSAIYFTSLNALRQNVARSNLLRTIGVVDAKNGPVHSSSLPKLSNLANLTTGAVARAGAGFVLMPMTIIKVRYESNLYAYKSIMGAGRDIFLTEGFRGFFSGFGATAIRDAPYAGLYVLFYEQLKKRLSHIVHSVPQAEELVENLGVRKNMKGSTSASINFGSGVLAAGLATAITNPFDAIKTRIQLQPKKYTNLVMAGRKMVGEEGVKSLFDGLGLRMGRKAVSSALAWTIYEELIRRAELAWKGEEVIV.

Solcar repeat units lie at residues 11–94, 122–206, and 234–318; these read SSSY…LRQN, LSNL…LKKR, and TSAS…LIRR. 6 helical membrane-spanning segments follow: residues 17–42, 69–95, 128–153, 181–204, 238–264, and 293–311; these read FTAG…TRLQ, GTVP…RQNV, LTTG…VRYE, GFGA…EQLK, INFG…KTRI, and GLGL…AWTI.

Belongs to the mitochondrial carrier (TC 2.A.29) family. SLC25A38 subfamily.

The protein resides in the mitochondrion inner membrane. It carries out the reaction glycine(in) = glycine(out). Functionally, mitochondrial glycine transporter that imports glycine into the mitochondrial matrix. Plays an important role in providing glycine for the first enzymatic step in heme biosynthesis, the condensation of glycine with succinyl-CoA to produce 5-aminolevulinate (ALA) in the mitochondrial matrix. The chain is Mitochondrial glycine transporter from Sclerotinia sclerotiorum (strain ATCC 18683 / 1980 / Ss-1) (White mold).